Here is a 235-residue protein sequence, read N- to C-terminus: Phosphoribosylaminoimidazole-succinocarboxamide synthase (235 aa).

Belongs to the SAICAR synthetase family.

The catalysed reaction is 5-amino-1-(5-phospho-D-ribosyl)imidazole-4-carboxylate + L-aspartate + ATP = (2S)-2-[5-amino-1-(5-phospho-beta-D-ribosyl)imidazole-4-carboxamido]succinate + ADP + phosphate + 2 H(+). Its pathway is purine metabolism; IMP biosynthesis via de novo pathway; 5-amino-1-(5-phospho-D-ribosyl)imidazole-4-carboxamide from 5-amino-1-(5-phospho-D-ribosyl)imidazole-4-carboxylate: step 1/2. The protein is Phosphoribosylaminoimidazole-succinocarboxamide synthase of Clostridium perfringens (strain 13 / Type A).